The primary structure comprises 65 residues: UPF0434 protein HS_0657 (65 aa).

It belongs to the UPF0434 family.

The polypeptide is UPF0434 protein HS_0657 (Histophilus somni (strain 129Pt) (Haemophilus somnus)).